We begin with the raw amino-acid sequence, 1036 residues long: Cellulose synthase-like protein D1 (1036 aa).

The interval 1 to 99 (MASSPPKKTL…GGGDGPKMGN (99 aa)) is disordered. 2 stretches are compositionally biased toward polar residues: residues 9 to 19 (TLNSQSSSLSR) and 69 to 80 (NQPAGSSGSTSE). The segment covering 86-95 (NRGGGGGDGP) has biased composition (gly residues). 2 helical membrane passes run 178 to 198 (ILSPYRLLIVIRLVIVFFFLW) and 208 to 228 (AMWLWGLSIVCEIWFAFSWIL). Residue Asp-308 is part of the active site. The tract at residues 626–665 (AMHVRTQSQASQTSQASDLESDTQPLNDDPDLGLPKKFGN) is disordered. The span at 631-642 (TQSQASQTSQAS) shows a compositional bias: low complexity. The active site involves Asp-741. The next 6 membrane-spanning stretches (helical) occupy residues 817–837 (IYPFTSIFLVVYCFLPALCLF), 848–868 (IHFLSYLLCITVTLTLISLLE), 895–915 (LAAVVQGLLKVIAGIEISFTL), 938–958 (GLFIMPLTIIIVNLVAIVIGA), 962–982 (IYSVIPQWGKLMGGIFFSLWV), and 1002–1022 (TIVYVWSGLVSITVSLLWITI).

This sequence belongs to the glycosyltransferase 2 family. Plant cellulose synthase-like D subfamily.

It localises to the golgi apparatus membrane. In terms of biological role, thought to be a Golgi-localized beta-glycan synthase that polymerize the backbones of noncellulosic polysaccharides (hemicelluloses) of plant cell wall. The chain is Cellulose synthase-like protein D1 (CSLD1) from Arabidopsis thaliana (Mouse-ear cress).